A 358-amino-acid polypeptide reads, in one-letter code: Protein RecA (358 aa).

Residue 67–74 (GPESSGKT) participates in ATP binding.

The protein belongs to the RecA family.

The protein resides in the cytoplasm. Its function is as follows. Can catalyze the hydrolysis of ATP in the presence of single-stranded DNA, the ATP-dependent uptake of single-stranded DNA by duplex DNA, and the ATP-dependent hybridization of homologous single-stranded DNAs. It interacts with LexA causing its activation and leading to its autocatalytic cleavage. This Xenorhabdus bovienii (Xenorhabdus nematophila subsp. bovienii) protein is Protein RecA.